Here is an 802-residue protein sequence, read N- to C-terminus: Copper-exporting P-type ATPase (802 aa).

HMA domains follow at residues 5 to 70 and 72 to 138; these read KKTT…YGVT and ETVE…YDAS. Residues C16, C19, C83, and C86 each coordinate Cu(+). The next 6 membrane-spanning stretches (helical) occupy residues 161–181, 192–212, 224–244, 256–276, 411–431, and 438–458; these read LIIS…HLFN, WFQF…FYVG, MDVL…YEMV, LYFE…YLEA, YFVP…ITLV, and PALV…LGLA. Residue D495 is the 4-aspartylphosphate intermediate of the active site. D690 and D694 together coordinate Mg(2+). 2 helical membrane passes run 748–767 and 771–790; these read LFWA…LGLL and VAGA…ALRL.

This sequence belongs to the cation transport ATPase (P-type) (TC 3.A.3) family. Type IB subfamily.

Its subcellular location is the cell membrane. The enzyme catalyses Cu(+)(in) + ATP + H2O = Cu(+)(out) + ADP + phosphate + H(+). Involved in copper export. The polypeptide is Copper-exporting P-type ATPase (copA) (Staphylococcus aureus (strain N315)).